We begin with the raw amino-acid sequence, 289 residues long: MVSLPRLCALWGCLLTAVHLGQCVTCSDKQYLHDGQCCDLCQPGSRLTSHCTALEKTQCHPCDSGEFSAQWNREIRCHQHRHCEPNQGLRVKKEGTAESDTVCTCKEGQHCTSKDCEACAQHTPCIPGFGVMEMATETTDTVCHPCPVGFFSNQSSLFEKCYPWTSCEDKNLEVLQKGTSQTNVICGLKSRMRALLVIPVVMGILITIFGVFLYIKKVVKKPKDNEILPPAARRQDPQEMEDYPGHNTAAPVQETLHGCQPVTQEDGKESRISVQERQVTDSIALRPLV.

The first 19 residues, M1–H19, serve as a signal peptide directing secretion. Residues L20–R193 lie on the Extracellular side of the membrane. 4 TNFR-Cys repeats span residues T25–H60, P61–C103, T104–H144, and P145–G187. 8 cysteine pairs are disulfide-bonded: C26–C37, C38–C51, C41–C59, C62–C77, C83–C103, C105–C119, C111–C116, and C125–C143. N153 carries N-linked (GlcNAc...) asparagine glycosylation. The chain crosses the membrane as a helical span at residues A194–I215. The Cytoplasmic segment spans residues K216–V289. The segment at L228–P251 is disordered.

Monomer and homodimer. Interacts with TRAF1, TRAF2 and TRAF6. Interacts with TRAF3 and TRAF5. Interacts with TRAF6 and MAP3K8; the interaction is required for ERK activation.

The protein resides in the cell membrane. Its subcellular location is the secreted. Receptor for TNFSF5/CD40LG. Transduces TRAF6- and MAP3K8-mediated signals that activate ERK in macrophages and B cells, leading to induction of immunoglobulin secretion. This Mus musculus (Mouse) protein is Tumor necrosis factor receptor superfamily member 5 (Cd40).